Consider the following 1079-residue polypeptide: Carbamoyl phosphate synthase large chain (1079 aa).

Positions 2–403 are carboxyphosphate synthetic domain; it reads PKSTDIKSIL…SIQKAIRGLE (402 aa). Arg129, Arg169, Gly175, Gly176, Glu208, Leu210, Glu215, Gly241, Ile242, His243, Gln285, and Glu299 together coordinate ATP. Residues 133–328 enclose the ATP-grasp 1 domain; sequence EHSMKKLNLE…IAKIAAKLAI (196 aa). Residues Gln285, Glu299, and Asn301 each coordinate Mg(2+). Mn(2+) contacts are provided by Gln285, Glu299, and Asn301. The tract at residues 404 to 553 is oligomerization domain; that stretch reads VGASGFDSKI…YSTWEDECES (150 aa). The tract at residues 554-936 is carbamoyl phosphate synthetic domain; the sequence is HPSKNNKKII…AFSKSMLGAH (383 aa). Residues 679-870 form the ATP-grasp 2 domain; it reads QKTVNKLRLQ…LAKISVRVMC (192 aa). ATP is bound by residues Arg715, Gln754, Leu756, Glu761, Gly786, Val787, His788, Ser789, Gln829, and Glu841. Mg(2+)-binding residues include Gln829, Glu841, and Asn843. Gln829, Glu841, and Asn843 together coordinate Mn(2+). The MGS-like domain maps to 937-1079; that stretch reads TNMKKSGRVL…KKIQLFYTKK (143 aa). The interval 937-1079 is allosteric domain; the sequence is TNMKKSGRVL…KKIQLFYTKK (143 aa).

It belongs to the CarB family. Composed of two chains; the small (or glutamine) chain promotes the hydrolysis of glutamine to ammonia, which is used by the large (or ammonia) chain to synthesize carbamoyl phosphate. Tetramer of heterodimers (alpha,beta)4. Mg(2+) serves as cofactor. It depends on Mn(2+) as a cofactor.

The catalysed reaction is hydrogencarbonate + L-glutamine + 2 ATP + H2O = carbamoyl phosphate + L-glutamate + 2 ADP + phosphate + 2 H(+). The enzyme catalyses hydrogencarbonate + NH4(+) + 2 ATP = carbamoyl phosphate + 2 ADP + phosphate + 2 H(+). The protein operates within amino-acid biosynthesis; L-arginine biosynthesis; carbamoyl phosphate from bicarbonate: step 1/1. It participates in pyrimidine metabolism; UMP biosynthesis via de novo pathway; (S)-dihydroorotate from bicarbonate: step 1/3. In terms of biological role, large subunit of the glutamine-dependent carbamoyl phosphate synthetase (CPSase). CPSase catalyzes the formation of carbamoyl phosphate from the ammonia moiety of glutamine, carbonate, and phosphate donated by ATP, constituting the first step of 2 biosynthetic pathways, one leading to arginine and/or urea and the other to pyrimidine nucleotides. The large subunit (synthetase) binds the substrates ammonia (free or transferred from glutamine from the small subunit), hydrogencarbonate and ATP and carries out an ATP-coupled ligase reaction, activating hydrogencarbonate by forming carboxy phosphate which reacts with ammonia to form carbamoyl phosphate. The sequence is that of Carbamoyl phosphate synthase large chain from Buchnera aphidicola subsp. Acyrthosiphon pisum (strain APS) (Acyrthosiphon pisum symbiotic bacterium).